An 823-amino-acid chain; its full sequence is Translation initiation factor IF-2 (823 aa).

Disordered regions lie at residues 30 to 66 (VPPS…DDKR) and 156 to 192 (TPSH…IKKV). Residues 36–48 (RGTSTGKSFTTVE) are compositionally biased toward polar residues. Residues 56 to 66 (PGEYISHDDKR) show a composition bias toward basic and acidic residues. In terms of domain architecture, tr-type G spans 322-491 (PRPPVVTVMG…LLLAEMLELS (170 aa)). Residues 331–338 (GHVDHGKT) are G1. Residue 331 to 338 (GHVDHGKT) coordinates GTP. The segment at 356–360 (GITQH) is G2. Residues 377 to 380 (DTPG) are G3. GTP contacts are provided by residues 377-381 (DTPGH) and 431-434 (NKID). Residues 431-434 (NKID) form a G4 region. The tract at residues 467-469 (SAK) is G5.

It belongs to the TRAFAC class translation factor GTPase superfamily. Classic translation factor GTPase family. IF-2 subfamily.

It is found in the cytoplasm. In terms of biological role, one of the essential components for the initiation of protein synthesis. Protects formylmethionyl-tRNA from spontaneous hydrolysis and promotes its binding to the 30S ribosomal subunits. Also involved in the hydrolysis of GTP during the formation of the 70S ribosomal complex. The protein is Translation initiation factor IF-2 of Anaplasma phagocytophilum (strain HZ).